Reading from the N-terminus, the 200-residue chain is Proteasome subunit beta 2 (200 aa).

A propeptide spans 1–10 (MSDQLELMTG) (removed in mature form; by autocatalysis). The Nucleophile role is filled by threonine 11.

It belongs to the peptidase T1B family. The 20S proteasome core is composed of 14 alpha and 14 beta subunits that assemble into four stacked heptameric rings, resulting in a barrel-shaped structure. The two inner rings, each composed of seven catalytic beta subunits, are sandwiched by two outer rings, each composed of seven alpha subunits. The catalytic chamber with the active sites is on the inside of the barrel. Has a gated structure, the ends of the cylinder being occluded by the N-termini of the alpha-subunits. Is capped at one or both ends by the proteasome regulatory ATPase, PAN.

The protein resides in the cytoplasm. The enzyme catalyses Cleavage of peptide bonds with very broad specificity.. Its activity is regulated as follows. The formation of the proteasomal ATPase PAN-20S proteasome complex, via the docking of the C-termini of PAN into the intersubunit pockets in the alpha-rings, triggers opening of the gate for substrate entry. Interconversion between the open-gate and close-gate conformations leads to a dynamic regulation of the 20S proteasome proteolysis activity. In terms of biological role, component of the proteasome core, a large protease complex with broad specificity involved in protein degradation. The polypeptide is Proteasome subunit beta 2 (Caldivirga maquilingensis (strain ATCC 700844 / DSM 13496 / JCM 10307 / IC-167)).